Consider the following 149-residue polypeptide: MAAKVEPFWIRKTLEQLDQDEWESLCDGCGLCCLQKLEDEDDNSVYYTRIACKLLDLKTCQCSDYPNRRDSVPDCIQLTPGKADEFKWLPRTCGYRLVSEGKDLPLWHHLVCGDRDAVHHERISQSGRMLAEGSVAEEDWEDHLIFRAG.

This sequence belongs to the UPF0260 family.

The chain is UPF0260 protein PFL_1499 from Pseudomonas fluorescens (strain ATCC BAA-477 / NRRL B-23932 / Pf-5).